The chain runs to 309 residues: uncharacterized protein (309 aa).

A compositionally biased stretch (basic residues) spans 1 to 16; the sequence is MAGNSRRRGAVRKAGT. Positions 1–70 are disordered; the sequence is MAGNSRRRGA…AKRTEETETV (70 aa). Positions 261, 281, and 290 each coordinate S-adenosyl-L-methionine.

The protein belongs to the class IV-like SAM-binding methyltransferase superfamily. RNA methyltransferase TrmH family.

This is an uncharacterized protein from Mycolicibacterium paratuberculosis (strain ATCC BAA-968 / K-10) (Mycobacterium paratuberculosis).